We begin with the raw amino-acid sequence, 859 residues long: Photoactivated adenylate cyclase subunit beta-like protein ST- (859 aa).

Residues 56–149 (LRRLMYLSKS…GRMYGDWHMK (94 aa)) enclose the BLUF 1 domain. The interval 420–444 (RPPIFDDTPKSNPRPRTPGYGGRQR) is disordered. In terms of domain architecture, BLUF 2 spans 471–563 (LTTLTYISQA…RVYTSEWTLT (93 aa)). The tract at residues 814 to 859 (ARSGEQPLTEPEQAKPDFRVSPGRDRHGVSGRRSNSSQGKGSIQVG) is disordered. Residues 825 to 841 (EQAKPDFRVSPGRDRHG) are compositionally biased toward basic and acidic residues. The span at 845-859 (RRSNSSQGKGSIQVG) shows a compositional bias: polar residues.

As to quaternary structure, heterotetramer of two alpha and two beta subunits.

It localises to the cell projection. It is found in the cilium. The protein localises to the flagellum. This Euglena gracilis protein is Photoactivated adenylate cyclase subunit beta-like protein ST-.